The chain runs to 364 residues: Aminomethyltransferase (364 aa).

This sequence belongs to the GcvT family. As to quaternary structure, the glycine cleavage system is composed of four proteins: P, T, L and H.

The catalysed reaction is N(6)-[(R)-S(8)-aminomethyldihydrolipoyl]-L-lysyl-[protein] + (6S)-5,6,7,8-tetrahydrofolate = N(6)-[(R)-dihydrolipoyl]-L-lysyl-[protein] + (6R)-5,10-methylene-5,6,7,8-tetrahydrofolate + NH4(+). In terms of biological role, the glycine cleavage system catalyzes the degradation of glycine. The chain is Aminomethyltransferase from Proteus mirabilis (strain HI4320).